Here is a 447-residue protein sequence, read N- to C-terminus: MTTILKHLPAGQRIGIAFSGGLDTSAALLWMRQKGAVPYAYTANLGQPDEDDYDAIPRRAMEYGAENARLIDCRKQLVAEGIAAIQCGAFHNTTGGLTYFNTTPLGRAVTGTMLVAAMKEDGVNIWGDGSTYKGNDIERFYRYGLLTNAELQIYKPWLDTDFIDELGGRHEMSEFMIACGFDYKMSVEKAYSTDSNMLGATHEAKDLEFLNSSVKIVNPIMGVKFWDESVKIPAEVVTVRFEQGHPVALNGKTFSDDVEMMLEANRIGGRHGLGMSDQIENRIIEAKSRGIYEAPGMALLHIAYERLLTGIHNEDTIEQYHSHGRQLGKLLYQGRWFDSQALMLRDGLQRWVASQITGEVTLELRRGNDYSILNTVSDNLTYKAERLTMEKGESVFSPDDRIGQLTMRNLDITDTREKLFGYAKAGLLTASSATGLPQVENLENKGK.

Residues 17 to 25 (AFSGGLDTS) and Ala-43 each bind ATP. L-citrulline is bound at residue Tyr-99. ATP is bound by residues Gly-129 and Thr-131. Residues Thr-131, Asn-135, and Asp-136 each coordinate L-aspartate. Asn-135 is a binding site for L-citrulline. Asp-136 lines the ATP pocket. L-citrulline contacts are provided by Arg-139 and Ser-192. Asp-194 is a binding site for ATP. 3 residues coordinate L-citrulline: Thr-201, Glu-203, and Glu-280.

This sequence belongs to the argininosuccinate synthase family. Type 2 subfamily. Homotetramer.

It localises to the cytoplasm. The catalysed reaction is L-citrulline + L-aspartate + ATP = 2-(N(omega)-L-arginino)succinate + AMP + diphosphate + H(+). The protein operates within amino-acid biosynthesis; L-arginine biosynthesis; L-arginine from L-ornithine and carbamoyl phosphate: step 2/3. This chain is Argininosuccinate synthase, found in Salmonella schwarzengrund (strain CVM19633).